The sequence spans 323 residues: tRNA U34 carboxymethyltransferase (323 aa).

Residues Lys91, Trp105, Lys110, Gly130, 180-181 (IE), Met196, Tyr200, and Arg315 contribute to the carboxy-S-adenosyl-L-methionine site.

Belongs to the class I-like SAM-binding methyltransferase superfamily. CmoB family. In terms of assembly, homotetramer.

It catalyses the reaction carboxy-S-adenosyl-L-methionine + 5-hydroxyuridine(34) in tRNA = 5-carboxymethoxyuridine(34) in tRNA + S-adenosyl-L-homocysteine + H(+). Its function is as follows. Catalyzes carboxymethyl transfer from carboxy-S-adenosyl-L-methionine (Cx-SAM) to 5-hydroxyuridine (ho5U) to form 5-carboxymethoxyuridine (cmo5U) at position 34 in tRNAs. The sequence is that of tRNA U34 carboxymethyltransferase from Geobacter sp. (strain M21).